Reading from the N-terminus, the 366-residue chain is NADP-dependent isopropanol dehydrogenase (366 aa).

Zn(2+) is bound by residues Cys-43, His-65, Glu-66, and Asp-156. Residues 181 to 184, 204 to 206, Tyr-224, 271 to 273, and Lys-346 each bind NADP(+); these read IGPV, GSR, and VNY.

This sequence belongs to the zinc-containing alcohol dehydrogenase family. In terms of assembly, homodimer. It depends on Zn(2+) as a cofactor.

The protein localises to the cytoplasm. The catalysed reaction is propan-2-ol + NADP(+) = acetone + NADPH + H(+). Alcohol dehydrogenase with a preference for medium chain secondary alcohols, such as 2-butanol and isopropanol. Has very low activity with primary alcohols, such as ethanol. Under physiological conditions, the enzyme reduces aldehydes and 2-ketones to produce secondary alcohols. Is also active with acetaldehyde and propionaldehyde. The chain is NADP-dependent isopropanol dehydrogenase from Entamoeba histolytica (strain ATCC 30459 / HM-1:IMSS / ABRM).